Reading from the N-terminus, the 305-residue chain is Ornithine carbamoyltransferase, anabolic (305 aa).

Residues 53–56, Gln80, Arg104, and 131–134 contribute to the carbamoyl phosphate site; these read STRT and HPCQ. L-ornithine-binding positions include Asn162, Asp219, and 223–224; that span reads SM. Carbamoyl phosphate-binding positions include 259–260 and Arg287; that span reads CL.

Belongs to the aspartate/ornithine carbamoyltransferase superfamily. OTCase family. As to quaternary structure, homotrimer.

The protein resides in the cytoplasm. The enzyme catalyses carbamoyl phosphate + L-ornithine = L-citrulline + phosphate + H(+). It functions in the pathway amino-acid biosynthesis; L-arginine biosynthesis; L-arginine from L-ornithine and carbamoyl phosphate: step 1/3. Reversibly catalyzes the transfer of the carbamoyl group from carbamoyl phosphate (CP) to the N(epsilon) atom of ornithine (ORN) to produce L-citrulline, which is a substrate for argininosuccinate synthetase (ArgG) involved in the final step in arginine biosynthesis. The protein is Ornithine carbamoyltransferase, anabolic of Pseudomonas aeruginosa (strain ATCC 15692 / DSM 22644 / CIP 104116 / JCM 14847 / LMG 12228 / 1C / PRS 101 / PAO1).